Here is a 445-residue protein sequence, read N- to C-terminus: Methionine aminopeptidase 2 (445 aa).

Residues 1–89 (MAAQAPVDEI…DPPRVLISQL (89 aa)) form a disordered region. Residues 60–74 (AKKKKKRKPKKKKKN) show a composition bias toward basic residues. Histidine 198 is a binding site for substrate. The a divalent metal cation site is built by aspartate 218, aspartate 229, and histidine 298. Histidine 306 provides a ligand contact to substrate. 2 residues coordinate a divalent metal cation: glutamate 331 and glutamate 426.

This sequence belongs to the peptidase M24A family. Methionine aminopeptidase eukaryotic type 2 subfamily. Co(2+) serves as cofactor. Requires Zn(2+) as cofactor. The cofactor is Mn(2+). Fe(2+) is required as a cofactor.

The protein localises to the cytoplasm. The catalysed reaction is Release of N-terminal amino acids, preferentially methionine, from peptides and arylamides.. Cotranslationally removes the N-terminal methionine from nascent proteins. The N-terminal methionine is often cleaved when the second residue in the primary sequence is small and uncharged (Met-Ala-, Cys, Gly, Pro, Ser, Thr, or Val). This is Methionine aminopeptidase 2 from Podospora anserina (strain S / ATCC MYA-4624 / DSM 980 / FGSC 10383) (Pleurage anserina).